The following is a 433-amino-acid chain: 5-methylthioadenosine/S-adenosylhomocysteine deaminase (433 aa).

Zn(2+) contacts are provided by H67 and H69. 3 residues coordinate substrate: E96, R148, and H187. Residue H214 coordinates Zn(2+). Positions 217 and 302 each coordinate substrate. D302 lines the Zn(2+) pocket.

Belongs to the metallo-dependent hydrolases superfamily. MTA/SAH deaminase family. Zn(2+) serves as cofactor.

The catalysed reaction is S-adenosyl-L-homocysteine + H2O + H(+) = S-inosyl-L-homocysteine + NH4(+). It catalyses the reaction S-methyl-5'-thioadenosine + H2O + H(+) = S-methyl-5'-thioinosine + NH4(+). Catalyzes the deamination of 5-methylthioadenosine and S-adenosyl-L-homocysteine into 5-methylthioinosine and S-inosyl-L-homocysteine, respectively. Is also able to deaminate adenosine. The polypeptide is 5-methylthioadenosine/S-adenosylhomocysteine deaminase (Carboxydothermus hydrogenoformans (strain ATCC BAA-161 / DSM 6008 / Z-2901)).